Reading from the N-terminus, the 644-residue chain is Threonine--tRNA ligase (644 aa).

Residues Met-1 to Thr-61 form the TGS domain. The segment at Asp-242–Pro-533 is catalytic. Residues Cys-333, His-384, and His-510 each contribute to the Zn(2+) site.

The protein belongs to the class-II aminoacyl-tRNA synthetase family. As to quaternary structure, homodimer. Zn(2+) serves as cofactor.

It is found in the cytoplasm. It carries out the reaction tRNA(Thr) + L-threonine + ATP = L-threonyl-tRNA(Thr) + AMP + diphosphate + H(+). Catalyzes the attachment of threonine to tRNA(Thr) in a two-step reaction: L-threonine is first activated by ATP to form Thr-AMP and then transferred to the acceptor end of tRNA(Thr). Also edits incorrectly charged L-seryl-tRNA(Thr). This Psychrobacter cryohalolentis (strain ATCC BAA-1226 / DSM 17306 / VKM B-2378 / K5) protein is Threonine--tRNA ligase.